Reading from the N-terminus, the 290-residue chain is ATP synthase gamma chain (290 aa).

This sequence belongs to the ATPase gamma chain family. As to quaternary structure, F-type ATPases have 2 components, CF(1) - the catalytic core - and CF(0) - the membrane proton channel. CF(1) has five subunits: alpha(3), beta(3), gamma(1), delta(1), epsilon(1). CF(0) has three main subunits: a, b and c.

Its subcellular location is the cell inner membrane. Produces ATP from ADP in the presence of a proton gradient across the membrane. The gamma chain is believed to be important in regulating ATPase activity and the flow of protons through the CF(0) complex. The polypeptide is ATP synthase gamma chain (Buchnera aphidicola subsp. Acyrthosiphon pisum (strain APS) (Acyrthosiphon pisum symbiotic bacterium)).